Here is a 361-residue protein sequence, read N- to C-terminus: Adenosine kinase (361 aa).

The Nuclear localization signal signature appears at 7–15 (PKPKKLKVE). Asp-34 contacts adenosine. Ser-48 contacts Mg(2+). Phosphotyrosine is present on Tyr-76. Asn-147 lines the Mg(2+) pocket. Gln-305 provides a ligand contact to adenosine. Asp-316 is an active-site residue. The active-site Proton acceptor is the Asp-316.

Belongs to the carbohydrate kinase PfkB family. Monomer. Requires Mg(2+) as cofactor.

It localises to the nucleus. It catalyses the reaction adenosine + ATP = AMP + ADP + H(+). Its pathway is purine metabolism; AMP biosynthesis via salvage pathway; AMP from adenosine: step 1/1. Functionally, catalyzes the phosphorylation of the purine nucleoside adenosine at the 5' position in an ATP-dependent manner. Serves as a potential regulator of concentrations of extracellular adenosine and intracellular adenine nucleotides. The sequence is that of Adenosine kinase (Adk) from Rattus norvegicus (Rat).